The following is a 445-amino-acid chain: Chromosome partition protein MukF (445 aa).

The tract at residues 213–241 (LSETSSTLRELQDTLQAASDELQTQILDI) is leucine-zipper.

Belongs to the MukF family. As to quaternary structure, interacts, and probably forms a ternary complex, with MukE and MukB via its C-terminal region. The complex formation is stimulated by calcium or magnesium. It is required for an interaction between MukE and MukB.

The protein resides in the cytoplasm. It is found in the nucleoid. Involved in chromosome condensation, segregation and cell cycle progression. May participate in facilitating chromosome segregation by condensation DNA from both sides of a centrally located replisome during cell division. Not required for mini-F plasmid partitioning. Probably acts via its interaction with MukB and MukE. Overexpression results in anucleate cells. It has a calcium binding activity. This is Chromosome partition protein MukF from Vibrio parahaemolyticus serotype O3:K6 (strain RIMD 2210633).